Reading from the N-terminus, the 495-residue chain is Geraniol 8-hydroxylase (495 aa).

The chain crosses the membrane as a helical span at residues 5 to 25 (FLTIAIGFLFTITLYQALNFF). Cys-438 serves as a coordination point for heme.

The protein belongs to the cytochrome P450 family. Heme is required as a cofactor. As to expression, expressed in leaves, stems and roots.

It localises to the endoplasmic reticulum membrane. The enzyme catalyses (2E)-geraniol + reduced [NADPH--hemoprotein reductase] + O2 = (6E)-8-hydroxygeraniol + oxidized [NADPH--hemoprotein reductase] + H2O + H(+). Functionally, hydroxylase involved in the biosynthesis of hydroxygeraniol, a precursor of the iridoid monoterpenoid swertiamarin. The chain is Geraniol 8-hydroxylase (CYP76B10) from Swertia mussotii (Felwort).